The chain runs to 316 residues: Ribose-phosphate pyrophosphokinase (316 aa).

Residues 42-44 (DGE) and 101-102 (RQ) each bind ATP. 2 residues coordinate Mg(2+): His-135 and Asp-174. Lys-197 is an active-site residue. D-ribose 5-phosphate-binding positions include Arg-199, Asp-223, and 227-231 (DTAGT).

This sequence belongs to the ribose-phosphate pyrophosphokinase family. Class I subfamily. In terms of assembly, homohexamer. Mg(2+) is required as a cofactor.

The protein resides in the cytoplasm. It catalyses the reaction D-ribose 5-phosphate + ATP = 5-phospho-alpha-D-ribose 1-diphosphate + AMP + H(+). It participates in metabolic intermediate biosynthesis; 5-phospho-alpha-D-ribose 1-diphosphate biosynthesis; 5-phospho-alpha-D-ribose 1-diphosphate from D-ribose 5-phosphate (route I): step 1/1. Functionally, involved in the biosynthesis of the central metabolite phospho-alpha-D-ribosyl-1-pyrophosphate (PRPP) via the transfer of pyrophosphoryl group from ATP to 1-hydroxyl of ribose-5-phosphate (Rib-5-P). In Halalkalibacterium halodurans (strain ATCC BAA-125 / DSM 18197 / FERM 7344 / JCM 9153 / C-125) (Bacillus halodurans), this protein is Ribose-phosphate pyrophosphokinase.